The primary structure comprises 521 residues: Cytochrome P450 monooxygenase ARMGADRAFT_1018420 (521 aa).

The chain crosses the membrane as a helical span at residues 9-26 (VSPIWILTAIVVVAYTTV). Position 443 (cysteine 443) interacts with heme. Asparagine 450 carries N-linked (GlcNAc...) asparagine glycosylation.

This sequence belongs to the cytochrome P450 family. It depends on heme as a cofactor.

Its subcellular location is the membrane. It functions in the pathway secondary metabolite biosynthesis. In terms of biological role, cytochrome P450 monooxygenase, part of the gene cluster that mediates the biosynthesis of melleolides, a range of antifungal and phytotoxic polyketide derivatives composed of an orsellinic acid (OA) moiety esterified to various sesquiterpene alcohols. The first step in melleolides biosynthesis is performed by the delta(6)-protoilludene synthase PRO1 which catalyzes the cyclization of farnesyl diphosphate to protoilludene. The orsellinic acid synthase armB produces OA by condensing acetyl-CoA with 3 malonyl-CoA units in a three-round chain elongation reaction folowed by a C2-C7 ring closure. ArmB further catalyzes the trans-esterification of OA to the various sesquiterpene alcohols resulting from the hydroxylation of protoilludene. The melleolides cluster also includes 5 cytochrome P450 monooxygenases, 4 NAD(+)-dependent oxidoreductases, one flavin-dependent oxidoreductase, and one O-methyltransferase. The cytochrome P450 monooxygenases may be involved in protoilludene hydroxylation to elaborate melleolides with multiple alcohol groups, such as melleolide D, which carries alcohol functionalities at C-4, C-5, C-10, and C-13. The role of the NAD(+)-dependent enzymes remains unknown. Numerous melleolides, including arnamial, show 5'-O-methylation of the aromatic moiety which may be catalyzed by the methyltransferase encoded in the cluster. The flavin-dependent oxidoreductase might represent the dehydrogenase yielding the aldehyde in position 1 of arnamial and other melleolides. Finally, several halogenase localized outside of the cluster, are able to catalyze the transfer of a single chlorine atom to the melleolide backbone, resulting in a 6'-chloromelleolide product. In Armillaria gallica (Bulbous honey fungus), this protein is Cytochrome P450 monooxygenase ARMGADRAFT_1018420.